The following is a 472-amino-acid chain: Nuclear receptor subfamily 0 group B member 1 (472 aa).

Repeat copies occupy residues 1–67 (MAGE…YRCC), 68–135 (FCGE…YRCC), and 136–202 (FCGE…YRSY). Positions 1–255 (MAGEDHPWQG…RLITLKDPQV (255 aa)) are 4 X 67 AA tandem repeats. Short sequence motifs (LXXLL motif) lie at residues 13 to 17 (LYNLL), 80 to 84 (LYSML), and 148 to 152 (LYSLL). Residues 190 to 471 (QSTQAMAFLY…DMMLEMLCAK (282 aa)) form the NR LBD domain. One copy of the 4; truncated repeat lies at 203-255 (VCGEEQPQQISVASGTPVSADQTPATPQEQPRAPWWDASPGVQRLITLKDPQV). Residues 214–231 (VASGTPVSADQTPATPQE) show a composition bias toward polar residues. 2 disordered regions span residues 214–238 (VASGTPVSADQTPATPQEQPRAPWW) and 324–343 (TTRRQETEGPEPAEPQATEQ). The AF-2 motif signature appears at 463 to 468 (MMLEML).

The protein belongs to the nuclear hormone receptor family. NR0 subfamily. In terms of assembly, homodimer. Interacts with NR5A1, NR5A2, NR0B2 and with COPS2. Interacts with ESRRB; represses ESRRB activity at the GATA6 promoter. As to expression, expressed in adult cerebral cortex, spinal cord, thymus, heart, lung, ovary, testis, adrenal gland, hypothalamus, spleen and kidney.

Its subcellular location is the nucleus. The protein resides in the cytoplasm. Nuclear receptor that lacks a DNA-binding domain and acts as a corepressor that inhibits the transcriptional activity of other nuclear receptors through heterodimeric interactions. Component of a cascade required for the development of the hypothalamic-pituitary-adrenal-gonadal axis. May also have a role in the development of the embryo and in the maintenance of embryonic stem cell pluripotency. The sequence is that of Nuclear receptor subfamily 0 group B member 1 (Nr0b1) from Mus musculus (Mouse).